The chain runs to 446 residues: Methylenetetrahydrofolate--tRNA-(uracil-5-)-methyltransferase TrmFO (446 aa).

11–16 contacts FAD; the sequence is GGGLAG.

The protein belongs to the MnmG family. TrmFO subfamily. FAD is required as a cofactor.

The protein localises to the cytoplasm. The enzyme catalyses uridine(54) in tRNA + (6R)-5,10-methylene-5,6,7,8-tetrahydrofolate + NADH + H(+) = 5-methyluridine(54) in tRNA + (6S)-5,6,7,8-tetrahydrofolate + NAD(+). It catalyses the reaction uridine(54) in tRNA + (6R)-5,10-methylene-5,6,7,8-tetrahydrofolate + NADPH + H(+) = 5-methyluridine(54) in tRNA + (6S)-5,6,7,8-tetrahydrofolate + NADP(+). In terms of biological role, catalyzes the folate-dependent formation of 5-methyl-uridine at position 54 (M-5-U54) in all tRNAs. In Oleidesulfovibrio alaskensis (strain ATCC BAA-1058 / DSM 17464 / G20) (Desulfovibrio alaskensis), this protein is Methylenetetrahydrofolate--tRNA-(uracil-5-)-methyltransferase TrmFO.